Consider the following 100-residue polypeptide: Small ribosomal subunit protein uS14c (100 aa).

This sequence belongs to the universal ribosomal protein uS14 family. As to quaternary structure, part of the 30S ribosomal subunit.

The protein localises to the plastid. The protein resides in the chloroplast. Binds 16S rRNA, required for the assembly of 30S particles. The sequence is that of Small ribosomal subunit protein uS14c from Chloranthus spicatus (Chulantree).